The following is a 261-amino-acid chain: MPQNDYIERHIKQHGKRLDHEERKRKREARESHKISERAQKLTGWKGKQFAKKRYAEKVSMRKKIKAHEQSKVKGSSKPLDTDGDALPTYLLDREQNNTAKAISSSIKQKRLEKADKFSVPLPKVRGISEEEMFKVIKTGKSRSKSWKRMITKHTFVGEGFTRRPVKMERIIRPSALRQKKANVTHPELGVTVFLPILAVKKNPQSPMYTQLGVLTKGTIIEVNVSELGMVTAGGKVVWGKYAQVTNEPDRDGCVNAVLLV.

Residues 1–40 (MPQNDYIERHIKQHGKRLDHEERKRKREARESHKISERAQ) show a composition bias toward basic and acidic residues. The interval 1–43 (MPQNDYIERHIKQHGKRLDHEERKRKREARESHKISERAQKLT) is disordered. 2 short sequence motifs (nuclear localization signal) span residues 15-22 (GKRLDHEE) and 51-58 (AKKRYAEK). The disordered stretch occupies residues 61 to 87 (MRKKIKAHEQSKVKGSSKPLDTDGDAL).

Belongs to the eukaryotic ribosomal protein eS8 family. Ribosome biogenesis protein NSA2 subfamily. In terms of assembly, component of the pre-66S ribosomal particle. Interacts with NOP7 and RRP1. Interacts with RSA4 (via WD repeats).

It localises to the nucleus. The protein resides in the nucleolus. Functionally, involved in the biogenesis of the 60S ribosomal subunit. May play a part in the quality control of pre-60S particles. Under normal, rapid growth conditions, high levels of NSA2 would allow the progression of pre-60S particles through the ITS2 processing. In Saccharomyces cerevisiae (strain YJM789) (Baker's yeast), this protein is Ribosome biogenesis protein NSA2 (NSA2).